The sequence spans 76 residues: Acyl carrier protein (76 aa).

A Carrier domain is found at M1–T74. Position 34 is an O-(pantetheine 4'-phosphoryl)serine (S34).

Belongs to the acyl carrier protein (ACP) family. In terms of processing, 4'-phosphopantetheine is transferred from CoA to a specific serine of apo-ACP by AcpS. This modification is essential for activity because fatty acids are bound in thioester linkage to the sulfhydryl of the prosthetic group.

Its subcellular location is the cytoplasm. Its pathway is lipid metabolism; fatty acid biosynthesis. In terms of biological role, carrier of the growing fatty acid chain in fatty acid biosynthesis. The sequence is that of Acyl carrier protein from Clostridium perfringens (strain ATCC 13124 / DSM 756 / JCM 1290 / NCIMB 6125 / NCTC 8237 / Type A).